The following is a 328-amino-acid chain: Tetraacyldisaccharide 4'-kinase (328 aa).

Position 55-62 (55-62) interacts with ATP; it reads TAGGNGKT.

Belongs to the LpxK family.

The catalysed reaction is a lipid A disaccharide + ATP = a lipid IVA + ADP + H(+). It participates in glycolipid biosynthesis; lipid IV(A) biosynthesis; lipid IV(A) from (3R)-3-hydroxytetradecanoyl-[acyl-carrier-protein] and UDP-N-acetyl-alpha-D-glucosamine: step 6/6. Functionally, transfers the gamma-phosphate of ATP to the 4'-position of a tetraacyldisaccharide 1-phosphate intermediate (termed DS-1-P) to form tetraacyldisaccharide 1,4'-bis-phosphate (lipid IVA). This Escherichia coli (strain SMS-3-5 / SECEC) protein is Tetraacyldisaccharide 4'-kinase.